The following is a 241-amino-acid chain: Small ribosomal subunit protein uS2 (241 aa).

The protein belongs to the universal ribosomal protein uS2 family.

This chain is Small ribosomal subunit protein uS2, found in Photorhabdus laumondii subsp. laumondii (strain DSM 15139 / CIP 105565 / TT01) (Photorhabdus luminescens subsp. laumondii).